We begin with the raw amino-acid sequence, 144 residues long: MAQRILVLHGPNLNLLGTREPHIYGSLTLAQIDQGLAALAGQLGVALTSWQSNHEGALVERIQAAAADGTDFIIINAAAYTHTSVAIRDALAAVAIPFIEVHLSNLYKRDSFRQHSYLSDLAIGLITGLGADGYEAALRYAARH.

Tyr24 serves as the catalytic Proton acceptor. The substrate site is built by Asn76, His82, and Asp89. His102 acts as the Proton donor in catalysis. Residues 103 to 104 (LS) and Arg113 contribute to the substrate site.

Belongs to the type-II 3-dehydroquinase family. Homododecamer.

It catalyses the reaction 3-dehydroquinate = 3-dehydroshikimate + H2O. It functions in the pathway metabolic intermediate biosynthesis; chorismate biosynthesis; chorismate from D-erythrose 4-phosphate and phosphoenolpyruvate: step 3/7. Functionally, catalyzes a trans-dehydration via an enolate intermediate. This Bordetella bronchiseptica (strain ATCC BAA-588 / NCTC 13252 / RB50) (Alcaligenes bronchisepticus) protein is 3-dehydroquinate dehydratase.